The sequence spans 149 residues: Calmodulin (149 aa).

EF-hand domains are found at residues 8–43, 44–79, 81–116, and 117–149; these read EQIAEFKEAFSLFDKDGDGTITTKELGTVMRSLGQN, PTEAELQDMINEVDADGNGTIDFPEFLTMMARKMKD, DSEEEILEAFKVFDKDGNGFISAAELRHIMTNLGEK, and LTDEEVDEMIREADIDGDGQINYEEFVKMMMSK. Ca(2+)-binding residues include D21, D23, D25, T27, E32, D57, D59, N61, T63, E68, D94, D96, N98, E105, D130, D132, D134, Q136, and E141.

The protein belongs to the calmodulin family.

Calmodulin mediates the control of a large number of enzymes, ion channels and other proteins by Ca(2+). Among the enzymes to be stimulated by the calmodulin-Ca(2+) complex are a number of protein kinases and phosphatases. The sequence is that of Calmodulin from Globisporangium splendens (Leaf rot fungus).